The primary structure comprises 1154 residues: Voltage-gated inwardly rectifying potassium channel KCNH2 (1154 aa).

Residues 1 to 403 (MPVRRGHVAP…RIHRWTILHY (403 aa)) lie on the Cytoplasmic side of the membrane. Residues 41 to 70 (VIYCNDGFCELCGYSRAEVMQRPCTCDFLH) form the PAS domain. The PAC domain maps to 92–144 (RKVEIAFYRKDGSCFLCLVDVVPVKNEDGAVIMFILNFEVVMEKDMVGSPARD). The interval 233–312 (ALVGSGSPPA…ASTGAMHPLR (80 aa)) is disordered. Ser-239 bears the Phosphoserine mark. The span at 258 to 269 (PDGSGSSCSLAR) shows a compositional bias: polar residues. A phosphoserine mark is found at Ser-283, Ser-284, Ser-320, and Ser-351. A helical transmembrane segment spans residues 404–424 (SPFKAVWDWLILLLVIYTAVF). Over 425–450 (TPYSAAFLLKETEEGSQAPDCGYACQ) the chain is Extracellular. The chain crosses the membrane as a helical span at residues 451–471 (PLAVVDLIVDIMFIVDILINF). The Cytoplasmic segment spans residues 472-495 (RTTYVNANEEVVSHPGRIAVHYFK). The chain crosses the membrane as a helical span at residues 496–516 (GWFLIDMVAAIPFDLLIFGSG). Residues 517 to 520 (SEEL) are Extracellular-facing. The chain crosses the membrane as a helical; Voltage-sensor span at residues 521 to 541 (IGLLKTARLLRLVRVARKLDR). Topologically, residues 542–547 (YSEYGA) are cytoplasmic. A helical transmembrane segment spans residues 548–568 (AVLFLLMCTFALIAHWLACIW). Topologically, residues 569–611 (YAIGNMEQPNMDSHIGWLHNLGDQIGKPYNSSGLGGPSIKDKY) are extracellular. An intramembrane region (pore-forming) is located at residues 612 to 632 (VTALYFTFSSLTSVGFGNVSP). A Selectivity filter motif is present at residues 624 to 629 (SVGFGN). The Extracellular portion of the chain corresponds to 633-638 (NTNSEK). A helical membrane pass occupies residues 639–659 (IFSICVMLIGSLMYASIFGNV). At 660–1154 (SAIIQRLYSG…LHRHGSDPGS (495 aa)) the chain is on the cytoplasmic side. The tract at residues 742-842 (PFRGATKGCL…IHRDDLLEVL (101 aa)) is cNMP-binding domain. The interval 870 to 985 (GSPGSTELEG…DVEKSSDTCN (116 aa)) is disordered. 2 positions are modified to phosphoserine: Ser-871 and Ser-874. Over residues 883-892 (RQRKRKLSFR) the composition is skewed to basic residues. Residues 916–927 (GPSGRGQQGGPW) show a composition bias toward gly residues. The segment covering 928 to 939 (GESLSSGPSSPE) has biased composition (low complexity). Arg-1014 carries the omega-N-methylarginine modification. Residues 1037-1064 (RGDVESRLDALQRQLNRLETRLSADMAT) are a coiled coil. Residues 1125-1154 (DGPARRLSLPGQLGALTSQPLHRHGSDPGS) are disordered. Ser-1132 bears the Phosphoserine mark.

It belongs to the potassium channel family. H (Eag) (TC 1.A.1.20) subfamily. Kv11.1/KCNH2 sub-subfamily. As to quaternary structure, the potassium channel is probably composed of a homo- or heterotetrameric complex of pore-forming alpha subunits that can associate with modulating beta subunits. Interacts with DNAJB12 and DNAJB14; chaperones DNAJB12 and DNAJB14 promote tetramerization. Heteromultimer with KCNH6/ERG2 and KCNH7/ERG3. Interacts with ALG10B. Forms a stable complex with KCNE1 or KCNE2, and that this heteromultimerization regulates Inward rectifier potassium channel activity. Interacts with CANX. The core-glycosylated, but not the fully glycosylated form interacts with RNF207. Interacts with NDFIP1 and NDFIP2; this interaction decreases the cell membrane expression by targeting KCNH2, through interaction with NEDD4L, for the degradation through the multivesicular bodies (MVBs)-lysosomal pathway. Phosphorylated on serine and threonine residues. Phosphorylation by PKA inhibits ion conduction.

Its subcellular location is the cell membrane. The enzyme catalyses K(+)(in) = K(+)(out). Functionally, pore-forming (alpha) subunit of voltage-gated inwardly rectifying potassium channel. Characterized by unusual gating kinetics by producing relatively small outward currents during membrane depolarization and large inward currents during subsequent repolarization which reflect a rapid inactivation during depolarization and quick recovery from inactivation but slow deactivation (closing) during repolarization. Channel properties are modulated by cAMP and subunit assembly. Forms a stable complex with KCNE1 or KCNE2, and that this heteromultimerization regulates inward rectifier potassium channel activity. The polypeptide is Voltage-gated inwardly rectifying potassium channel KCNH2 (Sus scrofa (Pig)).